The chain runs to 243 residues: 2,3-bisphosphoglycerate-dependent phosphoglycerate mutase (243 aa).

Residues 8–15 (RHGQSEWN), 21–22 (TG), Arg-60, 87–90 (ERHY), Lys-98, 114–115 (RR), and 183–184 (GN) contribute to the substrate site. The Tele-phosphohistidine intermediate role is filled by His-9. Glu-87 acts as the Proton donor/acceptor in catalysis.

The protein belongs to the phosphoglycerate mutase family. BPG-dependent PGAM subfamily.

The catalysed reaction is (2R)-2-phosphoglycerate = (2R)-3-phosphoglycerate. Its pathway is carbohydrate degradation; glycolysis; pyruvate from D-glyceraldehyde 3-phosphate: step 3/5. Functionally, catalyzes the interconversion of 2-phosphoglycerate and 3-phosphoglycerate. The chain is 2,3-bisphosphoglycerate-dependent phosphoglycerate mutase from Clostridium acetobutylicum (strain ATCC 824 / DSM 792 / JCM 1419 / IAM 19013 / LMG 5710 / NBRC 13948 / NRRL B-527 / VKM B-1787 / 2291 / W).